A 184-amino-acid polypeptide reads, in one-letter code: Tumor necrosis factor alpha-induced protein 8-like protein 2 (184 aa).

A Phosphoserine modification is found at Ser3.

The protein belongs to the TNFAIP8 family. TNFAIP8L2 subfamily. In terms of assembly, may interact with CASP8; however, such result is unclear since could not reproduce the interaction with CASP8. Interacts with RAC1. In terms of processing, phosphorylated by TAK1/MAP3K7; this phosphorylation triggers association with BTRC and subsequent ubiquitination and degradation. Post-translationally, ubiquitinated in a BTRC-depdent manner; leading to degradation mediated through the proteasome pathway.

It is found in the cytoplasm. Its subcellular location is the nucleus. The protein resides in the lysosome. Acts as a negative regulator of innate and adaptive immunity by maintaining immune homeostasis. Plays a regulatory role in the Toll-like signaling pathway by determining the strength of LPS-induced signaling and gene expression. Inhibits TCR-mediated T-cell activation and negatively regulate T-cell function to prevent hyperresponsiveness. Also inhibits autolysosome formation via negatively modulating MTOR activation by interacting with RAC1 and promoting the disassociation of the RAC1-MTOR complex. Plays an essential role in NK-cell biology by acting as a checkpoint and displaying an expression pattern correlating with NK-cell maturation process and by negatively regulating NK-cell maturation and antitumor immunity. Mechanistically, suppresses IL-15-triggered mTOR activity in NK-cells. The protein is Tumor necrosis factor alpha-induced protein 8-like protein 2 (TNFAIP8L2) of Otolemur garnettii (Small-eared galago).